Reading from the N-terminus, the 104-residue chain is Protein MGF 110-2L (104 aa).

Positions 1-19 (MRFFSYLGLLLAGLASLQG) are cleaved as a signal peptide.

This sequence belongs to the asfivirus MGF 110 family.

In terms of biological role, plays a role in virus cell tropism, and may be required for efficient virus replication in macrophages. The chain is Protein MGF 110-2L from African swine fever virus (isolate Tick/South Africa/Pretoriuskop Pr4/1996) (ASFV).